A 172-amino-acid polypeptide reads, in one-letter code: Keratin, high-sulfur matrix protein, B2A (172 aa).

Alanine 2 carries the post-translational modification N-acetylalanine. 5 consecutive repeats follow at residues 27–36 (PTCCQTSCCQ), 37–46 (PTSIQTSCCQ), 47–56 (PISIQTSCCQ), 57–66 (PTSIQTSCCQ), and 67–76 (PTCLQTSGCE).

The keratin products of mammalian epidermal derivatives such as wool and hair consist of microfibrils embedded in a rigid matrix of other proteins. The matrix proteins include the high-sulfur and high-tyrosine keratins, having molecular weights of 6-20 kDa, whereas the microfibrils contain the larger, low-sulfur keratins (40-56 kDa). The polypeptide is Keratin, high-sulfur matrix protein, B2A (Ovis aries (Sheep)).